Reading from the N-terminus, the 788-residue chain is Ribonucleoside-diphosphate reductase subunit alpha (788 aa).

The region spanning 2–92 is the ATP-cone domain; sequence ITVVKRNGRI…LYDLYHKVSG (91 aa). ATP is bound by residues Lys6, 12-18, and Thr52; that span reads EPLDITK. Thr200 lines the GDP pocket. Cys216 and Cys497 are joined by a disulfide. Residues 223-225 and Arg253 contribute to the dTTP site; that span reads DNI. A GDP-binding site is contributed by Asn424. Asn424 serves as the catalytic Proton acceptor. The active-site Cysteine radical intermediate is Cys426. GDP contacts are provided by residues Glu428 and 661–663; that span reads SSI. Glu428 serves as the catalytic Proton acceptor.

This sequence belongs to the ribonucleoside diphosphate reductase large chain family. In terms of assembly, tetramer of two alpha and two beta subunits.

The enzyme catalyses a 2'-deoxyribonucleoside 5'-diphosphate + [thioredoxin]-disulfide + H2O = a ribonucleoside 5'-diphosphate + [thioredoxin]-dithiol. Under complex allosteric control mediated by deoxynucleoside triphosphates and ATP binding to separate specificity and activation sites on the alpha subunit. The type of nucleotide bound at the specificity site determines substrate preference. It seems probable that ATP makes the enzyme reduce CDP and UDP, dGTP favors ADP reduction and dTTP favors GDP reduction. Stimulated by ATP and inhibited by dATP binding to the activity site. In terms of biological role, provides the precursors necessary for DNA synthesis. Catalyzes the biosynthesis of deoxyribonucleotides from the corresponding ribonucleotides. In Helicobacter pylori (strain ATCC 700392 / 26695) (Campylobacter pylori), this protein is Ribonucleoside-diphosphate reductase subunit alpha (nrdA).